Reading from the N-terminus, the 510-residue chain is GMP synthase [glutamine-hydrolyzing] (510 aa).

In terms of domain architecture, Glutamine amidotransferase type-1 spans 5–195 (MIVVLDFGSQ…VFEVCGCRGD (191 aa)). Cysteine 82 functions as the Nucleophile in the catalytic mechanism. Active-site residues include histidine 169 and glutamate 171. The GMPS ATP-PPase domain maps to 196–385 (WTMENFIDEQ…LGIPDEIVWR (190 aa)). 223-229 (SGGVDSS) is a binding site for ATP.

As to quaternary structure, homodimer.

The catalysed reaction is XMP + L-glutamine + ATP + H2O = GMP + L-glutamate + AMP + diphosphate + 2 H(+). It functions in the pathway purine metabolism; GMP biosynthesis; GMP from XMP (L-Gln route): step 1/1. Its function is as follows. Catalyzes the synthesis of GMP from XMP. The protein is GMP synthase [glutamine-hydrolyzing] of Geobacillus kaustophilus (strain HTA426).